The following is a 560-amino-acid chain: Serine/threonine-protein kinase TOS3 (560 aa).

The Protein kinase domain occupies 50–344 (FEILATLGNG…LADIKVHPFM (295 aa)). ATP is bound by residues 56–64 (LGNGQYGKV) and K79. Catalysis depends on D189, which acts as the Proton acceptor.

This sequence belongs to the protein kinase superfamily. Ser/Thr protein kinase family. In terms of processing, autophosphorylated.

It catalyses the reaction L-seryl-[protein] + ATP = O-phospho-L-seryl-[protein] + ADP + H(+). The catalysed reaction is L-threonyl-[protein] + ATP = O-phospho-L-threonyl-[protein] + ADP + H(+). In terms of biological role, one of the three SNF1 protein kinases (with SAK1 and ELM1) which are required for growth on nonfermentable carbon sources and nonpreferred sugars and for response to environmental stress. Activates SNF1 by phosphorylation of its activation-loop 'Thr-210'. Required for the regulation by SNF1 of the transcription of a large set of genes, the modification the activity of metabolic enzymes, and the control of various nutrient-responsive cellular developmental processes. Also phosphorylates GAL83, MIG1 and SIP2. This is Serine/threonine-protein kinase TOS3 (TOS3) from Saccharomyces cerevisiae (strain YJM789) (Baker's yeast).